The following is a 201-amino-acid chain: B-cell CLL/lymphoma 7 protein family member A (201 aa).

Residues 46 to 201 (YKWVPVTEPK…GKIDSSSEES (156 aa)) are disordered. The segment covering 54–71 (PKSDDNKNKKKGKDDKYG) has biased composition (basic and acidic residues). 3 stretches are compositionally biased toward polar residues: residues 73–83 (EVTTPENSSSP), 93–114 (SNQS…NTSP), and 133–142 (QYPSKQPSSG). Over residues 158 to 167 (TSKRDSKSQG) the composition is skewed to basic and acidic residues. The segment covering 168 to 179 (DSESFLDSSKSA) has biased composition (polar residues). The segment covering 192–201 (GKIDSSSEES) has biased composition (basic and acidic residues).

The protein belongs to the BCL7 family.

The chain is B-cell CLL/lymphoma 7 protein family member A (bcl7a) from Danio rerio (Zebrafish).